We begin with the raw amino-acid sequence, 616 residues long: MNLQEKLQQLPNDAGVYQYFDKNGHLLYIGKAKILKNRVKSYFKFTPKLQPADKLSPRIYKMISEVESCEWIVVPNEHDALILENSLIKQLKPKYNILLRDDKTYPYIFVDFDEDFPRLDITRRIQKSKSIKYFGPYSTGARDMLDSIYEIVPLVQKKSCVKGKKACLFYQIQKCLAPCENKISKEEYAKIVENALEYIYNKTKLISKLNEKMLQYSNDFRFEEAMTLRDRIKTIEKSQIKSDIDLATNEDIDIFAINANNKKAVIVRMFLRDGKLTSSSHDFLKIDNFDEEFEFDYQEAYERAIINYYDNEIPLLPKEILIAHELEITNELEEFLHTRFNKKIKLINPKKDKKREIVNIALNNCDELLRIENSKNQTSIYEELKELFNLQTLPYLIESFDNSHMMGQATVGAMIVWNESLNTFDKKAFRHYNLESKDEYSQMKEMLIRRIESFEKNPAPDLWIIDGGETLLKLAFDIVQSVGVNLDIIAIAKEKIDAKAHRAKGKAKDIIHYKTKNGEFKSFNLLTSDKRLQFVQRQRDEAHRFAITFHKKQKRAQDKQISLLQIKGIGEAKIKKLLLYFGEFEKIKKASFDELKTVLNEKDASTILDYFTNFKD.

Residues 12–97 form the GIY-YIG domain; sequence NDAGVYQYFD…IKQLKPKYNI (86 aa). Residues 203-238 form the UVR domain; sequence TKLISKLNEKMLQYSNDFRFEEAMTLRDRIKTIEKS.

Belongs to the UvrC family. As to quaternary structure, interacts with UvrB in an incision complex.

The protein resides in the cytoplasm. Functionally, the UvrABC repair system catalyzes the recognition and processing of DNA lesions. UvrC both incises the 5' and 3' sides of the lesion. The N-terminal half is responsible for the 3' incision and the C-terminal half is responsible for the 5' incision. The chain is UvrABC system protein C from Aliarcobacter butzleri (strain RM4018) (Arcobacter butzleri).